A 220-amino-acid polypeptide reads, in one-letter code: Claudin-24 (220 aa).

Residues 1–10 (MALIFRTAMQ) are Cytoplasmic-facing. A helical transmembrane segment spans residues 11–31 (SVGLLLSLLGWILSIITTYLP). Over 32-81 (HWKNLNLDLNEMENWTMGLWQTCVIQEEVGMQCKDFDSFLALPAELRVSR) the chain is Extracellular. A helical membrane pass occupies residues 82 to 102 (ILMFLSNGLGFLGLLVSGFGL). Over 103–117 (DCLRIGESQRDLKRR) the chain is Cytoplasmic. The chain crosses the membrane as a helical span at residues 118 to 138 (LLILGGILSWASGITALVPVS). Over 139–161 (WVAHKTVQEFWDENVPDFVPRWE) the chain is Extracellular. A helical membrane pass occupies residues 162–182 (FGEALFLGWFAGLSLLLGGCL). Topologically, residues 183–220 (LNCAACSSHAPLALGHYAVAQMQTQCPYLEDGTADPQV) are cytoplasmic.

The protein belongs to the claudin family.

It is found in the cell junction. It localises to the tight junction. Its subcellular location is the cell membrane. In terms of biological role, plays a major role in tight junction-specific obliteration of the intercellular space, through calcium-independent cell-adhesion activity. This chain is Claudin-24, found in Homo sapiens (Human).